Here is a 126-residue protein sequence, read N- to C-terminus: Fluoride-specific ion channel FluC (126 aa).

A run of 4 helical transmembrane segments spans residues 4 to 24 (PLLSIALGSVLGAWLRWFLGL), 33 to 53 (IPLGTVTVNLVGGFIIGFAMA), 67 to 87 (FVITGFCGALTTFSTFSIEIV), and 97 to 117 (MAMLAISIHLIGSLIFTCLGL). The Na(+) site is built by G74 and T77.

Belongs to the fluoride channel Fluc/FEX (TC 1.A.43) family.

Its subcellular location is the cell inner membrane. The catalysed reaction is fluoride(in) = fluoride(out). With respect to regulation, na(+) is not transported, but it plays an essential structural role and its presence is essential for fluoride channel function. Its function is as follows. Fluoride-specific ion channel. Important for reducing fluoride concentration in the cell, thus reducing its toxicity. The chain is Fluoride-specific ion channel FluC from Acinetobacter baumannii (strain AB307-0294).